A 953-amino-acid polypeptide reads, in one-letter code: E3 ubiquitin-protein ligase ZNF598 (953 aa).

Residues 25-39 (KPSKSTRIKPTKPHH) show a composition bias toward basic residues. A disordered region spans residues 25 to 47 (KPSKSTRIKPTKPHHTPSNSMES). The RING-type zinc finger occupies 57-97 (CVLCCQDIDLFAVGKCDHPVCYRCSTKMRVLCEQKYCAVCR). The C2H2-type zinc-finger motif lies at 215–238 (PLCKFCDDRYLDNDELLKHLRRDH). 2 disordered regions span residues 299-779 (SKNR…EDSS) and 884-911 (EKQQ…SSLD). Low complexity predominate over residues 371 to 380 (AAAMRASMAS). Positions 381 to 409 (HQEERSHAQERSMLKPRREEKLEPDETRN) are enriched in basic and acidic residues. 2 stretches are compositionally biased toward polar residues: residues 410-431 (NRST…NGSL) and 467-483 (LSGS…YTNQ). Serine 489 is subject to Phosphoserine. 2 stretches are compositionally biased toward low complexity: residues 508 to 518 (QSSAASAWSQA) and 536 to 553 (MTPM…PLPS). Polar residues-rich tracts occupy residues 555-564 (SVPQPLTASS) and 641-650 (LGSPSHTPET). Positions 655-666 (AHKENVPEKKPP) are enriched in basic and acidic residues. Over residues 695–711 (SCTSFPENITSSKQPVT) the composition is skewed to polar residues. Residues 747 to 765 (LPPPPPPGLGPAVSKPPPG) show a composition bias toward pro residues. Polar residues predominate over residues 770 to 779 (PLNSNVEDSS).

The protein belongs to the ZNF598/HEL2 family.

It localises to the cytoplasm. It is found in the cytosol. The enzyme catalyses S-ubiquitinyl-[E2 ubiquitin-conjugating enzyme]-L-cysteine + [acceptor protein]-L-lysine = [E2 ubiquitin-conjugating enzyme]-L-cysteine + N(6)-ubiquitinyl-[acceptor protein]-L-lysine.. It functions in the pathway protein modification; protein ubiquitination. In terms of biological role, E3 ubiquitin-protein ligase that plays a key role in the ribosome quality control (RQC), a pathway that takes place when a ribosome has stalled during translation, leading to degradation of nascent peptide chains. ZNF598 is activated when ribosomes are stalled within an mRNA following translation of prematurely polyadenylated mRNAs. Acts as a ribosome collision sensor: specifically recognizes and binds collided di-ribosome, which arises when a trailing ribosome encounters a slower leading ribosome, leading to terminally arrest translation. Following binding to colliding ribosomes, mediates monoubiquitination of 40S ribosomal proteins RPS10/eS10 and RPS3/uS3, and 'Lys-63'-linked polyubiquitination of RPS20/uS10. Polyubiquitination of RPS20/uS10 promotes recruitment of the RQT (ribosome quality control trigger) complex, which drives the disassembly of stalled ribosomes, followed by degradation of nascent peptides. The protein is E3 ubiquitin-protein ligase ZNF598 of Danio rerio (Zebrafish).